Here is a 434-residue protein sequence, read N- to C-terminus: Adenylosuccinate synthetase (434 aa).

Residues 14–20 (GDEGKGK) and 42–44 (GHE) contribute to the GTP site. The Proton acceptor role is filled by Asp-15. Mg(2+)-binding residues include Asp-15 and Gly-42. IMP is bound by residues 15-18 (DEGK), 40-43 (NSGH), Thr-133, Arg-147, Asn-229, Thr-244, and Arg-308. The active-site Proton donor is His-43. 304 to 310 (VTTGRVR) provides a ligand contact to substrate. GTP contacts are provided by residues Arg-310, 336-338 (KLD), and 422-424 (GTG).

It belongs to the adenylosuccinate synthetase family. As to quaternary structure, homodimer. Requires Mg(2+) as cofactor.

It localises to the cytoplasm. It carries out the reaction IMP + L-aspartate + GTP = N(6)-(1,2-dicarboxyethyl)-AMP + GDP + phosphate + 2 H(+). It participates in purine metabolism; AMP biosynthesis via de novo pathway; AMP from IMP: step 1/2. Functionally, plays an important role in the salvage pathway for purine nucleotide biosynthesis. Catalyzes the first committed step in the biosynthesis of AMP from IMP. This chain is Adenylosuccinate synthetase, found in Theileria parva (East coast fever infection agent).